A 325-amino-acid chain; its full sequence is tRNA U34 carboxymethyltransferase (325 aa).

Carboxy-S-adenosyl-L-methionine contacts are provided by residues lysine 91, tryptophan 105, lysine 110, glycine 130, 152-154 (DPS), 181-182 (ME), methionine 197, tyrosine 201, and arginine 316.

The protein belongs to the class I-like SAM-binding methyltransferase superfamily. CmoB family. Homotetramer.

The catalysed reaction is carboxy-S-adenosyl-L-methionine + 5-hydroxyuridine(34) in tRNA = 5-carboxymethoxyuridine(34) in tRNA + S-adenosyl-L-homocysteine + H(+). In terms of biological role, catalyzes carboxymethyl transfer from carboxy-S-adenosyl-L-methionine (Cx-SAM) to 5-hydroxyuridine (ho5U) to form 5-carboxymethoxyuridine (cmo5U) at position 34 in tRNAs. The polypeptide is tRNA U34 carboxymethyltransferase (Saccharophagus degradans (strain 2-40 / ATCC 43961 / DSM 17024)).